A 79-amino-acid polypeptide reads, in one-letter code: uncharacterized protein (79 aa).

It is found in the mitochondrion. This is an uncharacterized protein from Marchantia polymorpha (Common liverwort).